The sequence spans 187 residues: Ribosome-recycling factor (187 aa).

Belongs to the RRF family.

The protein localises to the cytoplasm. Functionally, responsible for the release of ribosomes from messenger RNA at the termination of protein biosynthesis. May increase the efficiency of translation by recycling ribosomes from one round of translation to another. The sequence is that of Ribosome-recycling factor from Bradyrhizobium sp. (strain BTAi1 / ATCC BAA-1182).